The chain runs to 110 residues: Ribonuclease P protein component (110 aa).

This sequence belongs to the RnpA family. As to quaternary structure, consists of a catalytic RNA component (M1 or rnpB) and a protein subunit.

It catalyses the reaction Endonucleolytic cleavage of RNA, removing 5'-extranucleotides from tRNA precursor.. Its function is as follows. RNaseP catalyzes the removal of the 5'-leader sequence from pre-tRNA to produce the mature 5'-terminus. It can also cleave other RNA substrates such as 4.5S RNA. The protein component plays an auxiliary but essential role in vivo by binding to the 5'-leader sequence and broadening the substrate specificity of the ribozyme. The polypeptide is Ribonuclease P protein component (Mesoplasma florum (strain ATCC 33453 / NBRC 100688 / NCTC 11704 / L1) (Acholeplasma florum)).